The following is a 385-amino-acid chain: Probable caffeine synthase MTL2 (385 aa).

Residues Y18, C62, N67, D101, L102, S140, F141, and C157 each coordinate S-adenosyl-L-homocysteine. The caffeine site is built by Y158, H161, and W162. N179 provides a ligand contact to Mg(2+). T238 contacts caffeine. Mg(2+)-binding residues include D261, F263, and N264. Y369 contacts caffeine.

It belongs to the methyltransferase superfamily. Type-7 methyltransferase family. Mg(2+) is required as a cofactor.

The protein operates within alkaloid biosynthesis. May be involved in the biosynthesis of caffeine. This Coffea canephora (Robusta coffee) protein is Probable caffeine synthase MTL2.